Consider the following 366-residue polypeptide: Chorismate synthase (366 aa).

NADP(+) is bound by residues arginine 48 and arginine 54. Residues 125–127, 238–239, glycine 278, 293–297, and arginine 319 each bind FMN; these read RSS, NA, and KPTSS.

It belongs to the chorismate synthase family. Homotetramer. It depends on FMNH2 as a cofactor.

The catalysed reaction is 5-O-(1-carboxyvinyl)-3-phosphoshikimate = chorismate + phosphate. It functions in the pathway metabolic intermediate biosynthesis; chorismate biosynthesis; chorismate from D-erythrose 4-phosphate and phosphoenolpyruvate: step 7/7. Catalyzes the anti-1,4-elimination of the C-3 phosphate and the C-6 proR hydrogen from 5-enolpyruvylshikimate-3-phosphate (EPSP) to yield chorismate, which is the branch point compound that serves as the starting substrate for the three terminal pathways of aromatic amino acid biosynthesis. This reaction introduces a second double bond into the aromatic ring system. This Ralstonia nicotianae (strain ATCC BAA-1114 / GMI1000) (Ralstonia solanacearum) protein is Chorismate synthase.